The sequence spans 190 residues: Sec-independent protein translocase protein TatB (190 aa).

A helical membrane pass occupies residues 2–22 (LPDIGGTELLVIAAVALIVVG). The tract at residues 130 to 190 (IVSKPARKPP…KASTNSDITS (61 aa)) is disordered. Residues 134-144 (PARKPPAKKAA) are compositionally biased toward basic residues. The segment covering 145-163 (AKPAAKAELVSKPKASAKA) has biased composition (low complexity).

The protein belongs to the TatB family. The Tat system comprises two distinct complexes: a TatABC complex, containing multiple copies of TatA, TatB and TatC subunits, and a separate TatA complex, containing only TatA subunits. Substrates initially bind to the TatABC complex, which probably triggers association of the separate TatA complex to form the active translocon.

Its subcellular location is the cell inner membrane. Its function is as follows. Part of the twin-arginine translocation (Tat) system that transports large folded proteins containing a characteristic twin-arginine motif in their signal peptide across membranes. Together with TatC, TatB is part of a receptor directly interacting with Tat signal peptides. TatB may form an oligomeric binding site that transiently accommodates folded Tat precursor proteins before their translocation. In Caulobacter sp. (strain K31), this protein is Sec-independent protein translocase protein TatB.